The following is a 422-amino-acid chain: MVGCRAASDAAEFESVVGSSRVARVSCAVRVGRVIIGGGSPVVVQSMALGGSGSLSSDLEEILCLAKEGSELIRVAINSEESIKSIPRIVEHLVSHGFDEKMVVGCGQYEVADLLNKYPDDAAFLGKIRINPGNVGFGDKRDRNFESVIEYAIKHDIPVRIGVNWGSLDKALIGKLMDDNASLASPYPDNVVMRKALVTSALQSAELAERIGLPRNKIVLSCKTSKVRDLVAVYSALSESADYALHLGLTEAGTGLKGIVSSTAGIAHLLLMGIGDTIRVSLTSTSREDRAQEVRVCKEILQSLGLRFFSAQTTSCPGCGRTNFPYFQKLVSGVNHYIDRRMQVWKVSNPGVVNMTVAVMGCVVNGPGESKHANLGISLPGNGEREVAAVYEDGRKLCTLHGENVLGEFLEIVESYVHRKYG.

[4Fe-4S] cluster is bound by residues Cys316, Cys319, Cys362, and Glu369.

This sequence belongs to the IspG family. [4Fe-4S] cluster serves as cofactor.

The enzyme catalyses (2E)-4-hydroxy-3-methylbut-2-enyl diphosphate + oxidized [flavodoxin] + H2O + 2 H(+) = 2-C-methyl-D-erythritol 2,4-cyclic diphosphate + reduced [flavodoxin]. It functions in the pathway isoprenoid biosynthesis; isopentenyl diphosphate biosynthesis via DXP pathway; isopentenyl diphosphate from 1-deoxy-D-xylulose 5-phosphate: step 5/6. In terms of biological role, converts 2C-methyl-D-erythritol 2,4-cyclodiphosphate (ME-2,4cPP) into 1-hydroxy-2-methyl-2-(E)-butenyl 4-diphosphate. The polypeptide is 4-hydroxy-3-methylbut-2-en-1-yl diphosphate synthase (flavodoxin) (Anaplasma marginale (strain St. Maries)).